The chain runs to 443 residues: Serine/threonine-protein kinase SSN3 (443 aa).

Positions 1–24 are disordered; it reads MERKRGREMNPPSADPPSATPVAR. The Protein kinase domain occupies 54–384; it reads YKIVGFISSG…AEKALEHRYF (331 aa). Residues 60–68 and Lys-84 each bind ATP; that span reads ISSGTYGRV. Asp-185 serves as the catalytic Proton acceptor. Positions 405–443 are disordered; it reads RRVSQEDNDIRTSSLPGTKRSGLPDDSLMGRPAKRLKEG.

The protein belongs to the protein kinase superfamily. CMGC Ser/Thr protein kinase family. CDC2/CDKX subfamily. As to quaternary structure, component of the srb8-11 complex, a regulatory module of the Mediator complex. It depends on Mg(2+) as a cofactor.

The protein localises to the nucleus. It catalyses the reaction L-seryl-[protein] + ATP = O-phospho-L-seryl-[protein] + ADP + H(+). It carries out the reaction L-threonyl-[protein] + ATP = O-phospho-L-threonyl-[protein] + ADP + H(+). The catalysed reaction is [DNA-directed RNA polymerase] + ATP = phospho-[DNA-directed RNA polymerase] + ADP + H(+). Functionally, component of the srb8-11 complex. The srb8-11 complex is a regulatory module of the Mediator complex which is itself dependent transcription. The srb8-11 complex may be involved in the transcriptional repression of a subset of genes regulated by Mediator. It may inhibit the association of the Mediator complex with RNA polymerase II to form the holoenzyme complex. The srb8-11 complex phosphorylates the C-terminal domain (CTD) of the largest subunit of RNA polymerase II. The chain is Serine/threonine-protein kinase SSN3 (SSN3) from Phaeosphaeria nodorum (strain SN15 / ATCC MYA-4574 / FGSC 10173) (Glume blotch fungus).